A 497-amino-acid chain; its full sequence is Angiopoietin-1 (497 aa).

Positions 1 to 19 (MTVFLSFAFFAAILTHIGC) are cleaved as a signal peptide. Positions 81-119 (QKLQHLEHVMENYTQWLQKLENYIVENMKSEMAQIQQNA) form a coiled coil. 5 N-linked (GlcNAc...) asparagine glycosylation sites follow: N92, N122, N154, N243, and N294. A coiled-coil region spans residues 153-261 (LNQTSRLEIQ…LELMDTVHNL (109 aa)). A Fibrinogen C-terminal domain is found at 276-496 (REEEKPFRDC…STTMMIRPLD (221 aa)). 2 disulfides stabilise this stretch: C285–C314 and C438–C451.

In terms of assembly, homooligomer. Interacts with TEK/TIE2. Interacts with SVEP1/polydom. Interacts with THBD; this interaction significantly inhibits the generation of activated PC and TAFIa/CPB2 by the thrombin/thrombomodulin complex.

It localises to the secreted. Functionally, binds and activates TIE2 receptor by inducing its tyrosine phosphorylation. Implicated in endothelial developmental processes later and distinct from that of VEGF. Appears to play a crucial role in mediating reciprocal interactions between the endothelium and surrounding matrix and mesenchyme. Mediates blood vessel maturation/stability. It may play an important role in the heart early development. This Rattus norvegicus (Rat) protein is Angiopoietin-1 (Angpt1).